We begin with the raw amino-acid sequence, 172 residues long: Small ribosomal subunit protein uS5 (172 aa).

Residues 17–80 form the S5 DRBM domain; that stretch reads LREKMISVNR…DEARRKMVKV (64 aa).

Belongs to the universal ribosomal protein uS5 family. In terms of assembly, part of the 30S ribosomal subunit. Contacts proteins S4 and S8.

With S4 and S12 plays an important role in translational accuracy. Functionally, located at the back of the 30S subunit body where it stabilizes the conformation of the head with respect to the body. In Cupriavidus taiwanensis (strain DSM 17343 / BCRC 17206 / CCUG 44338 / CIP 107171 / LMG 19424 / R1) (Ralstonia taiwanensis (strain LMG 19424)), this protein is Small ribosomal subunit protein uS5.